Consider the following 139-residue polypeptide: Putative pre-16S rRNA nuclease (139 aa).

The protein belongs to the YqgF nuclease family.

The protein localises to the cytoplasm. Its function is as follows. Could be a nuclease involved in processing of the 5'-end of pre-16S rRNA. In Haemophilus influenzae (strain 86-028NP), this protein is Putative pre-16S rRNA nuclease.